The chain runs to 69 residues: Large ribosomal subunit protein uL29 (69 aa).

This sequence belongs to the universal ribosomal protein uL29 family.

This is Large ribosomal subunit protein uL29 from Lachnoclostridium phytofermentans (strain ATCC 700394 / DSM 18823 / ISDg) (Clostridium phytofermentans).